An 863-amino-acid chain; its full sequence is Receptor-like protein 9DC1 (863 aa).

The N-terminal stretch at 1–21 (MGCVKLVFFMLYVFLFQLVSS) is a signal peptide. The Extracellular segment spans residues 22–812 (SSLPHLCPED…EEDSPMISWQ (791 aa)). The N-cap stretch occupies residues 24–90 (LPHLCPEDQA…GVHCDETTGQ (67 aa)). 2 N-linked (GlcNAc...) asparagine glycosylation sites follow: Asn-71 and Asn-108. An LRR 1; degenerate repeat occupies 91–114 (VIALDLRCSQLQGKFHSNSSLFQL). 2 LRR repeats span residues 115 to 138 (SNLK…KFGE) and 140 to 163 (SDLT…ISHL). Residues 164–190 (SKLHVLLIGDQYGLSIVPHNFEPLLKN) form an LRR 4; degenerate repeat. Residues Asn-190, Asn-203, and Asn-211 are each glycosylated (N-linked (GlcNAc...) asparagine). LRR repeat units follow at residues 191 to 213 (LTQL…SNFS), 214 to 237 (SHLT…VFHL), 240 to 262 (LEFL…KWNS), 264 to 286 (ASLM…SFSH), 287 to 311 (LTSL…LWNL), and 312 to 336 (TNIE…IFEK). A glycan (N-linked (GlcNAc...) asparagine) is linked at Asn-261. N-linked (GlcNAc...) asparagine glycans are attached at residues Asn-299 and Asn-310. One copy of the LRR 11; degenerate repeat lies at 337 to 357 (LKKLSLFRNDNLDGGLEFLSF). 15 LRR repeats span residues 358 to 382 (NTQL…ISGL), 383 to 406 (QNLE…IFSL), 408 to 428 (SLVE…EFKS), 429 to 452 (KTLS…LLNQ), 454 to 476 (NLQL…ICNL), 477 to 500 (KTLI…VVER), 502 to 524 (EYLS…TFSV), 525 to 549 (GNIL…MINC), 551 to 572 (YLTL…WLGY), 573 to 597 (LFQL…GNTN), 599 to 623 (FMGL…ILGN), 667 to 690 (LDSN…IIGD), 691 to 714 (LVGL…SFQN), 715 to 739 (LSVL…LASL), and 741 to 759 (FLEV…IPKG). N-linked (GlcNAc...) asparagine glycans are attached at residues Asn-378, Asn-396, and Asn-416. A glycan (N-linked (GlcNAc...) asparagine) is linked at Asn-464. Asn-519 carries an N-linked (GlcNAc...) asparagine glycan. N-linked (GlcNAc...) asparagine glycosylation occurs at Asn-563. 3 N-linked (GlcNAc...) asparagine glycosylation sites follow: Asn-674, Asn-698, and Asn-714. N-linked (GlcNAc...) asparagine glycans are attached at residues Asn-746 and Asn-767. Residues 760–812 (KQFDSFGNTSYQGNDGLRGFPLSKLCGGEDQVTTPAELDQEEEEEDSPMISWQ) are C-cap/acidic domain. A helical membrane pass occupies residues 813–833 (GVLVGYGCGLVIGLSVIYIMW). Topologically, residues 834–863 (STQYPAWFSRMDLKLEHIITTKMKKHKKRY) are cytoplasmic.

This sequence belongs to the RLP family.

The protein localises to the cell membrane. Functionally, involved in plant defense. Confers resistance to the fungal pathogen C.fulvum through recognition of the AVR9 elicitor protein. This is Receptor-like protein 9DC1 from Solanum pimpinellifolium (Currant tomato).